A 118-amino-acid chain; its full sequence is UPF0102 protein ROP_66030 (118 aa).

The protein belongs to the UPF0102 family.

The chain is UPF0102 protein ROP_66030 from Rhodococcus opacus (strain B4).